Consider the following 223-residue polypeptide: Adenylate kinase (223 aa).

Position 17–22 (17–22) interacts with ATP; it reads GAGKGT. Residues 37–66 are NMP; sequence STGDMLRSQVAKGTPLGVEAKKIMDQGGLV. AMP-binding positions include threonine 38, arginine 43, 64-66, 93-96, and glutamine 100; these read GLV and GFPR. Residues 134–171 are LID; the sequence is GRLVHPSSGRSYHKLFNPPKVEMTDDVTGEPLVQRSDD. Residues arginine 135 and 144 to 145 each bind ATP; that span reads SY. AMP-binding residues include arginine 168 and arginine 179. Glutamine 207 provides a ligand contact to ATP.

It belongs to the adenylate kinase family. AK2 subfamily. In terms of assembly, monomer.

It localises to the cytoplasm. It is found in the cytosol. The protein localises to the mitochondrion intermembrane space. It carries out the reaction AMP + ATP = 2 ADP. Functionally, catalyzes the reversible transfer of the terminal phosphate group between ATP and AMP. Plays an important role in cellular energy homeostasis and in adenine nucleotide metabolism. Adenylate kinase activity is critical for regulation of the phosphate utilization and the AMP de novo biosynthesis pathways. The sequence is that of Adenylate kinase from Vanderwaltozyma polyspora (strain ATCC 22028 / DSM 70294 / BCRC 21397 / CBS 2163 / NBRC 10782 / NRRL Y-8283 / UCD 57-17) (Kluyveromyces polysporus).